The chain runs to 605 residues: Ankyrin repeat domain-containing protein 13D (605 aa).

2 consecutive UIM domains span residues glutamate 482 to glutamate 501 and glutamate 528 to serine 547. The segment covering glutamine 538–glutamine 554 has biased composition (low complexity). The tract at residues glutamine 538–histidine 605 is disordered. Serine 552 bears the Phosphoserine mark. Residue threonine 556 is modified to Phosphothreonine. The segment covering serine 564–leucine 575 has biased composition (low complexity). UIM domains lie at serine 564 to leucine 583 and glutamine 589 to histidine 605. The span at serine 576–glutamine 589 shows a compositional bias: basic and acidic residues.

As to quaternary structure, interacts with EGFR (ubiquitinated); the interaction is direct and may regulate EGFR internalization.

Its subcellular location is the cell membrane. The protein localises to the late endosome. Ubiquitin-binding protein that specifically recognizes and binds 'Lys-63'-linked ubiquitin. Does not bind 'Lys-48'-linked ubiquitin. Positively regulates the internalization of ligand-activated EGFR by binding to the Ub moiety of ubiquitinated EGFR at the cell membrane. The polypeptide is Ankyrin repeat domain-containing protein 13D (Ankrd13d) (Mus musculus (Mouse)).